Reading from the N-terminus, the 144-residue chain is Group IID secretory phospholipase A2 (144 aa).

A signal peptide spans 1-19 (MRLALLCGLLLAGITATQG). 7 disulfide bridges follow: Cys-45/Cys-137, Cys-47/Cys-63, Cys-62/Cys-117, Cys-68/Cys-144, Cys-69/Cys-110, Cys-78/Cys-103, and Cys-96/Cys-108. Ca(2+)-binding residues include His-46, Gly-48, and Gly-50. His-66 is an active-site residue. Asp-67 contacts Ca(2+). Asn-99 carries an N-linked (GlcNAc...) asparagine glycan. Asp-111 is a catalytic residue.

This sequence belongs to the phospholipase A2 family. Ca(2+) is required as a cofactor. In terms of tissue distribution, highly expressed in secondary lymphoid tissues, spleen and lymph nodes. Expressed at a lesser extent in thymus. Expressed in CD4-positive, IL2RA/CD25-positive, FOXP3-positive Tregs (at protein level). Expressed in myeloid cell subsets resident in spleen and lymph nodes, ITGAX/CD11C-positive dendritic cells and macrophages (at protein level). Enriched in CD4-positive, ITGAM/CD11B-positive dendritic cell subset. Expressed in pulmonary ITGAX/CD11C-positive dendritic cell subset (at protein level).

The protein resides in the secreted. It localises to the cell membrane. The protein localises to the cytoplasm. It catalyses the reaction a 1,2-diacyl-sn-glycero-3-phosphoethanolamine + H2O = a 1-acyl-sn-glycero-3-phosphoethanolamine + a fatty acid + H(+). It carries out the reaction 1-hexadecanoyl-2-(9Z-octadecenoyl)-sn-glycero-3-phosphoethanolamine + H2O = 1-hexadecanoyl-sn-glycero-3-phosphoethanolamine + (9Z)-octadecenoate + H(+). The catalysed reaction is 1-hexadecanoyl-2-(9Z,12Z-octadecadienoyl)-sn-glycero-3-phosphoethanolamine + H2O = 1-hexadecanoyl-sn-glycero-3-phosphoethanolamine + (9Z,12Z)-octadecadienoate + H(+). The enzyme catalyses 1,2-dihexadecanoyl-sn-glycero-3-phospho-(1'-sn-glycerol) + H2O = 1-hexadecanoyl-sn-glycero-3-phospho-(1'-sn-glycerol) + hexadecanoate + H(+). It catalyses the reaction 1-hexadecanoyl-2-(9Z-octadecenoyl)-sn-glycero-3-phospho-(1'-sn-glycerol) + H2O = 1-hexadecanoyl-sn-glycero-3-phospho-(1'-sn-glycerol) + (9Z)-octadecenoate + H(+). It carries out the reaction a 1,2-diacyl-sn-glycero-3-phosphocholine + H2O = a 1-acyl-sn-glycero-3-phosphocholine + a fatty acid + H(+). The catalysed reaction is 1,2-dihexadecanoyl-sn-glycero-3-phosphocholine + H2O = 1-hexadecanoyl-sn-glycero-3-phosphocholine + hexadecanoate + H(+). The enzyme catalyses 1-hexadecanoyl-2-(9Z-octadecenoyl)-sn-glycero-3-phosphocholine + H2O = 1-hexadecanoyl-sn-glycero-3-phosphocholine + (9Z)-octadecenoate + H(+). It catalyses the reaction 1-hexadecanoyl-2-(9Z,12Z-octadecadienoyl)-sn-glycero-3-phosphocholine + H2O = (9Z,12Z)-octadecadienoate + 1-hexadecanoyl-sn-glycero-3-phosphocholine + H(+). It carries out the reaction 1-hexadecanoyl-2-(4Z,7Z,10Z,13Z,16Z,19Z-docosahexaenoyl)-sn-glycero-3-phosphocholine + H2O = (4Z,7Z,10Z,13Z,16Z,19Z)-docosahexaenoate + 1-hexadecanoyl-sn-glycero-3-phosphocholine + H(+). Secretory calcium-dependent phospholipase A2 that primarily targets extracellular lipids, exerting anti-inflammatory and immunosuppressive functions. Hydrolyzes the ester bond of the fatty acyl group attached at sn-2 position of phospholipids (phospholipase A2 activity) with preference for phosphatidylethanolamines and phosphatidylglycerols over phosphatidylcholines. In draining lymph nodes, selectively hydrolyzes diacyl and alkenyl forms of phosphatidylethanolamines, releasing omega-3 polyunsaturated fatty acids (PUFAs) such as eicosapentaenoate and docosahexaenoate that are precursors of the anti-inflammatory lipid mediators, resolvins. During the resolution phase of acute inflammation drives docosahexaenoate-derived resolvin D1 synthesis, which suppresses dendritic cell activation and T-helper 1 immune response. May act in an autocrine and paracrine manner. Via a mechanism independent of its catalytic activity, promotes differentiation of regulatory T cells (Tregs) and participates in the maintenance of immune tolerance. May contribute to lipid remodeling of cellular membranes and generation of lipid mediators involved in pathogen clearance. Displays bactericidal activity against Gram-positive bacteria by directly hydrolyzing phospholipids of the bacterial membrane. The protein is Group IID secretory phospholipase A2 (Pla2g2d) of Mus musculus (Mouse).